The primary structure comprises 159 residues: Ribosomal RNA large subunit methyltransferase H (159 aa).

S-adenosyl-L-methionine is bound by residues Leu-76, Gly-108, and 127–132 (FGKMTL).

This sequence belongs to the RNA methyltransferase RlmH family. In terms of assembly, homodimer.

The protein resides in the cytoplasm. The catalysed reaction is pseudouridine(1915) in 23S rRNA + S-adenosyl-L-methionine = N(3)-methylpseudouridine(1915) in 23S rRNA + S-adenosyl-L-homocysteine + H(+). Its function is as follows. Specifically methylates the pseudouridine at position 1915 (m3Psi1915) in 23S rRNA. This Lysinibacillus sphaericus (strain C3-41) protein is Ribosomal RNA large subunit methyltransferase H.